A 184-amino-acid polypeptide reads, in one-letter code: Glutathione-regulated potassium-efflux system ancillary protein KefG (184 aa).

Belongs to the NAD(P)H dehydrogenase (quinone) family. KefG subfamily. Interacts with KefB.

It localises to the cell inner membrane. It catalyses the reaction a quinone + NADH + H(+) = a quinol + NAD(+). The catalysed reaction is a quinone + NADPH + H(+) = a quinol + NADP(+). Functionally, regulatory subunit of a potassium efflux system that confers protection against electrophiles. Required for full activity of KefB. The protein is Glutathione-regulated potassium-efflux system ancillary protein KefG of Yersinia enterocolitica serotype O:8 / biotype 1B (strain NCTC 13174 / 8081).